We begin with the raw amino-acid sequence, 363 residues long: 1-aminocyclopropane-1-carboxylate oxidase homolog (363 aa).

One can recognise a Fe2OG dioxygenase domain in the interval 212 to 312 (FHLFCSCNYY…MSITCFFGES (101 aa)). Fe cation contacts are provided by His236, Asp238, and His292.

This sequence belongs to the iron/ascorbate-dependent oxidoreductase family.

The polypeptide is 1-aminocyclopropane-1-carboxylate oxidase homolog (ACO3) (Solanum lycopersicum (Tomato)).